Reading from the N-terminus, the 175-residue chain is Calcineurin subunit B (175 aa).

EF-hand domains are found at residues 21 to 56 (DEIE…SANP), 60 to 88 (RIME…FSGR), 90 to 125 (SKDE…MVGS), and 131 to 166 (QLQQ…TEVA). Aspartate 34, aspartate 36, serine 38, serine 40, glutamate 45, aspartate 66, aspartate 68, serine 70, aspartate 72, glutamate 77, aspartate 103, aspartate 105, aspartate 107, glutamate 114, aspartate 144, aspartate 146, aspartate 148, glutamine 150, and glutamate 155 together coordinate Ca(2+).

It belongs to the calcineurin regulatory subunit family. Composed of a catalytic subunit (A) and a regulatory subunit (B).

In terms of biological role, regulatory subunit of calcineurin, a calcium-dependent, calmodulin stimulated protein phosphatase. Confers calcium sensitivity. This chain is Calcineurin subunit B (CNB1), found in Candida glabrata (strain ATCC 2001 / BCRC 20586 / JCM 3761 / NBRC 0622 / NRRL Y-65 / CBS 138) (Yeast).